A 479-amino-acid polypeptide reads, in one-letter code: MTFREKMPTSPKSPLRRRRSSWTGTWLNHQTTSFKQAVSAVIQAQSPRSRFKSLSSDFSDVDRTLSLSDSLLLKILEKLPESQNEDVSLVCKRWLSVQGRRLRSMKVFDWEFLLSGRLVSRFPKLTSVDLVNACFNPSSNSGILLCHTSISFHVSTDSSLNLNFVEESLLDNEMVDKGLRVLGRGSFDLIKLVVINATELGLLSLAEDCSDLQELELHKCSDNLLRGIAACENLRGLRLVGSVDGLYSSSVSDIGLTILAQGCKRLVKLELSGCEGSFDGIKAIGQCCEVLEELSICDHRMDDGWIAALSYFESLKTLLISSCRKIDSSPGPGKLLGSCPALESLQLRRCCLNDKEGMRALFKVCDGVTKVNIQDCWGLDDDSFSLAKAFRRVRFLSLEGCSILTTSGLESVILHWEELESMRVVSCKNIKDSEISAALSSLFSLLKELTWRPDTRSHLSSSLEGTGIGKRGSKFFKKR.

The tract at residues Met1–Ser20 is disordered. Residues Asp62–Phe108 enclose the F-box domain.

The protein is F-box protein At5g51380 of Arabidopsis thaliana (Mouse-ear cress).